Consider the following 510-residue polypeptide: Protein disulfide-isomerase (510 aa).

Residues 1–20 form the signal peptide; sequence MLRRALLCLALTALFRAGAG. One can recognise a Thioredoxin 1 domain in the interval 27-136; the sequence is HVLVLHKGNF…IVNWLKKRTG (110 aa). Active-site nucleophile residues include cysteine 55 and cysteine 58. Cysteine 55 and cysteine 58 are joined by a disulfide. The residue at position 202 (lysine 202) is an N6-acetyllysine. Lysine 224 and lysine 273 each carry N6-succinyllysine. A phosphoserine mark is found at serine 333 and serine 359. A Thioredoxin 2 domain is found at 351–477; the sequence is GKIKPHLMSQ…FKKFLESGGQ (127 aa). Active-site nucleophile residues include cysteine 399 and cysteine 402. Cysteine 399 and cysteine 402 form a disulfide bridge. Serine 429 is subject to Phosphoserine. The disordered stretch occupies residues 473 to 510; it reads ESGGQDGAGDDDDLEDLEEAEEPDLEEDDDQKAVKDEL. The span at 480-502 shows a compositional bias: acidic residues; the sequence is AGDDDDLEDLEEAEEPDLEEDDD. The Prevents secretion from ER signature appears at 507 to 510; that stretch reads KDEL.

Belongs to the protein disulfide isomerase family. Heterodimer; heterodimerizes with the protein microsomal triglyceride transfer MTTP. Homodimer. Monomers and homotetramers may also occur. Interacts with P4HA2, forming a heterotetramer consisting of 2 alpha subunits (P4HA2) and 2 beta (P4HB), where P4HB plays the role of a structural subunit; this tetramer catalyzes the formation of 4-hydroxyproline in collagen. Also constitutes the structural subunit of the microsomal triacylglycerol transfer protein MTTP in mammalian cells. Stabilizes both enzymes and retain them in the ER without contributing to the catalytic activity. Binds UBQLN1. Interacts with ERO1B. Interacts with ILDR2. Interacts with ERN1/IRE1A (via N-terminus); the interaction is enhanced by phosphorylation of P4HB by FAM20C in response to endoplasmic reticulum stress and results in attenuation of ERN1 activity. Phosphorylation of Ser-359 by FAM20C is induced by endoplasmic reticulum stress and results in a functional switch from oxidoreductase to molecular chaperone. It also promotes interaction with ERN1.

It localises to the endoplasmic reticulum. It is found in the endoplasmic reticulum lumen. The protein resides in the melanosome. Its subcellular location is the cell membrane. The catalysed reaction is Catalyzes the rearrangement of -S-S- bonds in proteins.. Functionally, this multifunctional protein catalyzes the formation, breakage and rearrangement of disulfide bonds. At the cell surface, seems to act as a reductase that cleaves disulfide bonds of proteins attached to the cell. May therefore cause structural modifications of exofacial proteins. Inside the cell, seems to form/rearrange disulfide bonds of nascent proteins. At high concentrations and following phosphorylation by FAM20C, functions as a chaperone that inhibits aggregation of misfolded proteins. At low concentrations, facilitates aggregation (anti-chaperone activity). May be involved with other chaperones in the structural modification of the TG precursor in hormone biogenesis. Also acts as a structural subunit of various enzymes such as prolyl 4-hydroxylase and microsomal triacylglycerol transfer protein MTTP. Receptor for LGALS9; the interaction retains P4HB at the cell surface of Th2 T helper cells, increasing disulfide reductase activity at the plasma membrane, altering the plasma membrane redox state and enhancing cell migration. The sequence is that of Protein disulfide-isomerase (P4HB) from Bos taurus (Bovine).